The primary structure comprises 149 residues: MRFWGSFLLVVILDRISKAWVLASFLPRESRSLIEGGLYLTYVQNRGAAFGLMPGKSWLFFISALLVIMALVIYNWRSKASPLEALSTGLIAGGALGNLIDRYFYGFVIDFIDLGWWPVFNLADSAIVCGGILLLILVLLDGKREERNA.

A run of 2 helical transmembrane segments spans residues 53-73 (MPGKSWLFFISALLVIMALVI) and 89-109 (GLIAGGALGNLIDRYFYGFVI). Active-site residues include aspartate 110 and aspartate 124. Residues 119-139 (VFNLADSAIVCGGILLLILVL) traverse the membrane as a helical segment.

The protein belongs to the peptidase A8 family.

The protein localises to the cell membrane. It carries out the reaction Release of signal peptides from bacterial membrane prolipoproteins. Hydrolyzes -Xaa-Yaa-Zaa-|-(S,diacylglyceryl)Cys-, in which Xaa is hydrophobic (preferably Leu), and Yaa (Ala or Ser) and Zaa (Gly or Ala) have small, neutral side chains.. Its pathway is protein modification; lipoprotein biosynthesis (signal peptide cleavage). This protein specifically catalyzes the removal of signal peptides from prolipoproteins. In Syntrophomonas wolfei subsp. wolfei (strain DSM 2245B / Goettingen), this protein is Lipoprotein signal peptidase.